The primary structure comprises 177 residues: uncharacterized protein (177 aa).

Residues 122 to 177 (LPFTRNGSGQQSNKLRDPKKGRTHKPKPSEKHKKNKTGKKGAQEKTHRSRSSRKGN) are disordered. Basic residues-rich tracts occupy residues 142–160 (GRTH…KTGK) and 168–177 (HRSRSSRKGN).

This is an uncharacterized protein from Saccharomyces cerevisiae (strain ATCC 204508 / S288c) (Baker's yeast).